A 159-amino-acid chain; its full sequence is Putative esterase DR_2406 (159 aa).

Belongs to the thioesterase PaaI family.

The sequence is that of Putative esterase DR_2406 from Deinococcus radiodurans (strain ATCC 13939 / DSM 20539 / JCM 16871 / CCUG 27074 / LMG 4051 / NBRC 15346 / NCIMB 9279 / VKM B-1422 / R1).